The sequence spans 371 residues: 4-hydroxy-3-methylbut-2-en-1-yl diphosphate synthase (flavodoxin) (371 aa).

4 residues coordinate [4Fe-4S] cluster: C272, C275, C307, and E314.

This sequence belongs to the IspG family. [4Fe-4S] cluster is required as a cofactor.

The enzyme catalyses (2E)-4-hydroxy-3-methylbut-2-enyl diphosphate + oxidized [flavodoxin] + H2O + 2 H(+) = 2-C-methyl-D-erythritol 2,4-cyclic diphosphate + reduced [flavodoxin]. It participates in isoprenoid biosynthesis; isopentenyl diphosphate biosynthesis via DXP pathway; isopentenyl diphosphate from 1-deoxy-D-xylulose 5-phosphate: step 5/6. Converts 2C-methyl-D-erythritol 2,4-cyclodiphosphate (ME-2,4cPP) into 1-hydroxy-2-methyl-2-(E)-butenyl 4-diphosphate. The protein is 4-hydroxy-3-methylbut-2-en-1-yl diphosphate synthase (flavodoxin) of Pseudomonas paraeruginosa (strain DSM 24068 / PA7) (Pseudomonas aeruginosa (strain PA7)).